We begin with the raw amino-acid sequence, 484 residues long: Protein nucleotidyltransferase YdiU (484 aa).

Gly81, Gly83, Arg84, Lys103, Asp115, Gly116, Arg166, and Arg173 together coordinate ATP. The Proton acceptor role is filled by Asp244. Residues Asn245 and Asp254 each contribute to the Mg(2+) site. Asp254 contributes to the ATP binding site.

It belongs to the SELO family. Mg(2+) serves as cofactor. Mn(2+) is required as a cofactor.

The enzyme catalyses L-seryl-[protein] + ATP = 3-O-(5'-adenylyl)-L-seryl-[protein] + diphosphate. It catalyses the reaction L-threonyl-[protein] + ATP = 3-O-(5'-adenylyl)-L-threonyl-[protein] + diphosphate. It carries out the reaction L-tyrosyl-[protein] + ATP = O-(5'-adenylyl)-L-tyrosyl-[protein] + diphosphate. The catalysed reaction is L-histidyl-[protein] + UTP = N(tele)-(5'-uridylyl)-L-histidyl-[protein] + diphosphate. The enzyme catalyses L-seryl-[protein] + UTP = O-(5'-uridylyl)-L-seryl-[protein] + diphosphate. It catalyses the reaction L-tyrosyl-[protein] + UTP = O-(5'-uridylyl)-L-tyrosyl-[protein] + diphosphate. Nucleotidyltransferase involved in the post-translational modification of proteins. It can catalyze the addition of adenosine monophosphate (AMP) or uridine monophosphate (UMP) to a protein, resulting in modifications known as AMPylation and UMPylation. The polypeptide is Protein nucleotidyltransferase YdiU (Shewanella baltica (strain OS185)).